Reading from the N-terminus, the 206-residue chain is Glycerol-3-phosphate acyltransferase (206 aa).

5 helical membrane-spanning segments follow: residues 14–34 (IALA…GLIL), 67–87 (ATLL…GYFL), 91–111 (AAII…WIGF), 124–144 (LLGV…AVAV), and 148–168 (YSSL…LILG).

Belongs to the PlsY family. As to quaternary structure, probably interacts with PlsX.

It is found in the cell inner membrane. The enzyme catalyses an acyl phosphate + sn-glycerol 3-phosphate = a 1-acyl-sn-glycero-3-phosphate + phosphate. Its pathway is lipid metabolism; phospholipid metabolism. Catalyzes the transfer of an acyl group from acyl-phosphate (acyl-PO(4)) to glycerol-3-phosphate (G3P) to form lysophosphatidic acid (LPA). This enzyme utilizes acyl-phosphate as fatty acyl donor, but not acyl-CoA or acyl-ACP. This Rhizobium etli (strain ATCC 51251 / DSM 11541 / JCM 21823 / NBRC 15573 / CFN 42) protein is Glycerol-3-phosphate acyltransferase.